A 536-amino-acid chain; its full sequence is Chromosomal replication initiator protein DnaA (536 aa).

The interval Met-1 to Pro-72 is domain I, interacts with DnaA modulators. A domain II region spans residues Pro-72–Ser-199. Residues Arg-97–Asn-121 form a disordered region. The segment covering Pro-105–Asn-121 has biased composition (low complexity). Residues Lys-200–Ser-416 are domain III, AAA+ region. Gly-244, Gly-246, Lys-247, and Thr-248 together coordinate ATP. The tract at residues Lys-417–Gly-536 is domain IV, binds dsDNA.

This sequence belongs to the DnaA family. As to quaternary structure, oligomerizes as a right-handed, spiral filament on DNA at oriC.

The protein resides in the cytoplasm. In terms of biological role, plays an essential role in the initiation and regulation of chromosomal replication. ATP-DnaA binds to the origin of replication (oriC) to initiate formation of the DNA replication initiation complex once per cell cycle. Binds the DnaA box (a 9 base pair repeat at the origin) and separates the double-stranded (ds)DNA. Forms a right-handed helical filament on oriC DNA; dsDNA binds to the exterior of the filament while single-stranded (ss)DNA is stabiized in the filament's interior. The ATP-DnaA-oriC complex binds and stabilizes one strand of the AT-rich DNA unwinding element (DUE), permitting loading of DNA polymerase. After initiation quickly degrades to an ADP-DnaA complex that is not apt for DNA replication. Binds acidic phospholipids. This is Chromosomal replication initiator protein DnaA from Burkholderia thailandensis (strain ATCC 700388 / DSM 13276 / CCUG 48851 / CIP 106301 / E264).